Consider the following 405-residue polypeptide: S-adenosylmethionine synthase (405 aa).

Histidine 22 provides a ligand contact to ATP. Residue aspartate 24 participates in Mg(2+) binding. Glutamate 50 contacts K(+). L-methionine-binding residues include glutamate 63 and glutamine 107. The tract at residues 107 to 117 (QSPDIAQGVNR) is flexible loop. ATP-binding positions include 184–186 (DGK), 250–251 (RF), aspartate 259, 265–266 (RK), alanine 282, and lysine 286. Residue aspartate 259 participates in L-methionine binding. Position 290 (lysine 290) interacts with L-methionine.

The protein belongs to the AdoMet synthase family. Homotetramer; dimer of dimers. The cofactor is Mg(2+). It depends on K(+) as a cofactor.

Its subcellular location is the cytoplasm. It catalyses the reaction L-methionine + ATP + H2O = S-adenosyl-L-methionine + phosphate + diphosphate. It participates in amino-acid biosynthesis; S-adenosyl-L-methionine biosynthesis; S-adenosyl-L-methionine from L-methionine: step 1/1. In terms of biological role, catalyzes the formation of S-adenosylmethionine (AdoMet) from methionine and ATP. The overall synthetic reaction is composed of two sequential steps, AdoMet formation and the subsequent tripolyphosphate hydrolysis which occurs prior to release of AdoMet from the enzyme. The polypeptide is S-adenosylmethionine synthase (Roseiflexus castenholzii (strain DSM 13941 / HLO8)).